A 140-amino-acid chain; its full sequence is Large ribosomal subunit protein uL11 (140 aa).

It belongs to the universal ribosomal protein uL11 family. As to quaternary structure, part of the ribosomal stalk of the 50S ribosomal subunit. Interacts with L10 and the large rRNA to form the base of the stalk. L10 forms an elongated spine to which L12 dimers bind in a sequential fashion forming a multimeric L10(L12)X complex. One or more lysine residues are methylated.

Functionally, forms part of the ribosomal stalk which helps the ribosome interact with GTP-bound translation factors. The polypeptide is Large ribosomal subunit protein uL11 (Caldanaerobacter subterraneus subsp. tengcongensis (strain DSM 15242 / JCM 11007 / NBRC 100824 / MB4) (Thermoanaerobacter tengcongensis)).